A 217-amino-acid chain; its full sequence is Germin-like protein subfamily 1 member 1 (217 aa).

The N-terminal stretch at 1–18 is a signal peptide; the sequence is MILNILLTLTLLMGRVKS. Cysteines 27 and 45 form a disulfide. Residues 59-209 enclose the Cupin type-1 domain; that stretch reads SALSRPGNTK…AYDINGQDVA (151 aa). A glycan (N-linked (GlcNAc...) asparagine) is linked at Asn-75. Positions 108, 110, 115, and 154 each coordinate Mn(2+).

This sequence belongs to the germin family. In terms of assembly, oligomer (believed to be a pentamer but probably hexamer).

It is found in the secreted. The protein resides in the extracellular space. The protein localises to the apoplast. Functionally, may play a role in plant defense. Probably has no oxalate oxidase activity even if the active site is conserved. The sequence is that of Germin-like protein subfamily 1 member 1 (GLP7) from Arabidopsis thaliana (Mouse-ear cress).